A 311-amino-acid chain; its full sequence is Olfactory receptor 1N1 (311 aa).

Residues 1 to 23 are Extracellular-facing; the sequence is MENQSSISEFFLRGISAPPEQQQ. Residue Asn3 is glycosylated (N-linked (GlcNAc...) asparagine). The helical transmembrane segment at 24–47 threads the bilayer; the sequence is SLFGIFLCMYLVTLTGNLLIILAI. At 48–55 the chain is on the cytoplasmic side; that stretch reads GSDLHLHT. The chain crosses the membrane as a helical span at residues 56-77; sequence PMYFFLANLSFVDMGLTSSTVT. The Extracellular segment spans residues 78-98; that stretch reads KMLVNIQTRHHTISYTGCLTQ. A disulfide bridge connects residues Cys95 and Cys187. The helical transmembrane segment at 99–118 threads the bilayer; the sequence is MYFFLMFGDLDSFFLAAMAY. Over 119–137 the chain is Cytoplasmic; it reads DRYVAICHPLCYSTVMRPQ. A helical membrane pass occupies residues 138-156; that stretch reads VCALMLALCWVLTNIVALT. Residues 157-194 lie on the Extracellular side of the membrane; the sequence is HTFLMARLSFCVTGEIAHFFCDITPVLKLSCSDTHINE. Residues 195–217 traverse the membrane as a helical segment; it reads MMVFVLGGTVLIVPFLCIVTSYI. Topologically, residues 218–234 are cytoplasmic; it reads HIVPAILRVRTRGGVGK. Residues 235–257 traverse the membrane as a helical segment; that stretch reads AFSTCSSHLCVVCVFYGTLFSAY. Topologically, residues 258-270 are extracellular; sequence LCPPSIASEEKDI. The helical transmembrane segment at 271-290 threads the bilayer; sequence AAAAMYTIVTPMLNPFIYSL. At 291–311 the chain is on the cytoplasmic side; that stretch reads RNKDMKGALKRLFSHRSIVSS.

Belongs to the G-protein coupled receptor 1 family.

Its subcellular location is the cell membrane. Functionally, odorant receptor. The polypeptide is Olfactory receptor 1N1 (OR1N1) (Homo sapiens (Human)).